The primary structure comprises 287 residues: Membrane protein insertase YidC 2 (287 aa).

An N-terminal signal peptide occupies residues 1 to 26 (MKKKKRFKQKLLIASLVIGLMAVLSG). The N-palmitoyl cysteine moiety is linked to residue cysteine 27. Cysteine 27 carries the S-diacylglycerol cysteine lipid modification. A run of 5 helical transmembrane segments spans residues 65 to 85 (YAVG…PLMI), 135 to 155 (MMGC…YQAI), 178 to 198 (YILP…SMMG), 207 to 224 (AMIV…GITL), and 228 to 250 (LALY…NNPF).

The protein belongs to the OXA1/ALB3/YidC family. Type 2 subfamily.

It is found in the cell membrane. Functionally, required for the insertion and/or proper folding and/or complex formation of integral membrane proteins into the membrane. Involved in integration of membrane proteins that insert both dependently and independently of the Sec translocase complex, as well as at least some lipoproteins. The sequence is that of Membrane protein insertase YidC 2 from Listeria monocytogenes serovar 1/2a (strain ATCC BAA-679 / EGD-e).